A 221-amino-acid polypeptide reads, in one-letter code: Octanoyltransferase (221 aa).

Residues 36 to 221 form the BPL/LPL catalytic domain; sequence KKEDNQLFFC…LRSIFMEIFA (186 aa). Residues 81 to 88, 154 to 156, and 167 to 169 contribute to the substrate site; these read RGGDITYH, AIG, and GFA. Catalysis depends on Cys-185, which acts as the Acyl-thioester intermediate.

It belongs to the LipB family.

The protein resides in the cytoplasm. It catalyses the reaction octanoyl-[ACP] + L-lysyl-[protein] = N(6)-octanoyl-L-lysyl-[protein] + holo-[ACP] + H(+). Its pathway is protein modification; protein lipoylation via endogenous pathway; protein N(6)-(lipoyl)lysine from octanoyl-[acyl-carrier-protein]: step 1/2. Catalyzes the transfer of endogenously produced octanoic acid from octanoyl-acyl-carrier-protein onto the lipoyl domains of lipoate-dependent enzymes. Lipoyl-ACP can also act as a substrate although octanoyl-ACP is likely to be the physiological substrate. The sequence is that of Octanoyltransferase from Parabacteroides distasonis (strain ATCC 8503 / DSM 20701 / CIP 104284 / JCM 5825 / NCTC 11152).